Here is a 118-residue protein sequence, read N- to C-terminus: Non-specific lipid-transfer protein A (118 aa).

Residues 1-25 form the signal peptide; sequence MAGVMKLACLVLACMIVAGPITANR. 4 disulfides stabilise this stretch: C29–C76, C39–C53, C54–C100, and C74–C114.

The protein belongs to the plant LTP family.

In terms of biological role, plant non-specific lipid-transfer proteins transfer phospholipids as well as galactolipids across membranes. May play a role in wax or cutin deposition in the cell walls of expanding epidermal cells and certain secretory tissues. The polypeptide is Non-specific lipid-transfer protein A (WAX9A) (Brassica oleracea var. italica (Broccoli)).